The sequence spans 66 residues: DNA-directed RNA polymerase subunit omega (66 aa).

The protein belongs to the RNA polymerase subunit omega family. As to quaternary structure, the RNAP catalytic core consists of 2 alpha, 1 beta, 1 beta' and 1 omega subunit. When a sigma factor is associated with the core the holoenzyme is formed, which can initiate transcription.

It carries out the reaction RNA(n) + a ribonucleoside 5'-triphosphate = RNA(n+1) + diphosphate. Promotes RNA polymerase assembly. Latches the N- and C-terminal regions of the beta' subunit thereby facilitating its interaction with the beta and alpha subunits. The protein is DNA-directed RNA polymerase subunit omega of Geobacillus kaustophilus (strain HTA426).